A 299-amino-acid chain; its full sequence is Oxygen-dependent coproporphyrinogen-III oxidase (299 aa).

Position 92 (Ser92) interacts with substrate. Positions 96 and 106 each coordinate Mn(2+). The active-site Proton donor is His106. Substrate is bound at residue 108–110; sequence NVR. Mn(2+) is bound by residues His145 and His175. An important for dimerization region spans residues 240 to 275; it reads YVEFNLVWDRGTLFGLQTGGRTESILMSMPPLVRWE. A substrate-binding site is contributed by 258-260; the sequence is GGR.

The protein belongs to the aerobic coproporphyrinogen-III oxidase family. Homodimer. It depends on Mn(2+) as a cofactor.

The protein resides in the cytoplasm. It catalyses the reaction coproporphyrinogen III + O2 + 2 H(+) = protoporphyrinogen IX + 2 CO2 + 2 H2O. The protein operates within porphyrin-containing compound metabolism; protoporphyrin-IX biosynthesis; protoporphyrinogen-IX from coproporphyrinogen-III (O2 route): step 1/1. Its function is as follows. Involved in the heme biosynthesis. Catalyzes the aerobic oxidative decarboxylation of propionate groups of rings A and B of coproporphyrinogen-III to yield the vinyl groups in protoporphyrinogen-IX. The chain is Oxygen-dependent coproporphyrinogen-III oxidase from Escherichia coli (strain SMS-3-5 / SECEC).